We begin with the raw amino-acid sequence, 507 residues long: ATP synthase subunit alpha, chloroplastic (507 aa).

ATP is bound at residue 170–177 (GDRQTGKT). A Phosphothreonine modification is found at T257.

Belongs to the ATPase alpha/beta chains family. F-type ATPases have 2 components, CF(1) - the catalytic core - and CF(0) - the membrane proton channel. CF(1) has five subunits: alpha(3), beta(3), gamma(1), delta(1), epsilon(1). CF(0) has four main subunits: a, b, b' and c.

The protein localises to the plastid. The protein resides in the chloroplast thylakoid membrane. It carries out the reaction ATP + H2O + 4 H(+)(in) = ADP + phosphate + 5 H(+)(out). In terms of biological role, produces ATP from ADP in the presence of a proton gradient across the membrane. The alpha chain is a regulatory subunit. The protein is ATP synthase subunit alpha, chloroplastic of Aethionema cordifolium (Lebanon stonecress).